The following is a 136-amino-acid chain: MARTKQTARKSTGGKAPRKQLASKAARKSAPVSGGVKKPHRYKPGTVALREIRRFQKSTELLIRKLPFQRLVREIAQDFKSDLRFQSSAIGALQEAVEAYLVGLFEDTNLCAIHAKRVTIQKKDMQLARRLRGERS.

Residues Met-1–Tyr-42 form a disordered region. At Lys-5 the chain carries N6,N6,N6-trimethyllysine; alternate. At Lys-5 the chain carries N6,N6-dimethyllysine; alternate. N6-methyllysine; alternate occurs at positions 5 and 10. Lys-10 bears the N6-acetyllysine; alternate mark. Position 11 is a phosphoserine (Ser-11). Lys-15 carries the N6,N6-dimethyllysine; alternate modification. An N6-acetyllysine; alternate mark is found at Lys-15, Lys-19, Lys-24, Lys-28, and Lys-37. N6-methyllysine; alternate occurs at positions 19, 24, 28, and 37. Lys-28 and Lys-37 each carry N6,N6,N6-trimethyllysine; alternate. Residues Lys-28 and Lys-37 each carry the N6,N6-dimethyllysine; alternate modification. N6-acetyllysine is present on residues Lys-57 and Lys-65. At Lys-80 the chain carries N6,N6,N6-trimethyllysine; alternate. The residue at position 80 (Lys-80) is an N6,N6-dimethyllysine; alternate. Lys-80 is subject to N6-methyllysine; alternate.

Belongs to the histone H3 family. The nucleosome is a histone octamer containing two molecules each of H2A, H2B, H3 and H4 assembled in one H3-H4 heterotetramer and two H2A-H2B heterodimers. The octamer wraps approximately 147 bp of DNA. In terms of processing, phosphorylated by IPL1 to form H3S10ph. H3S10ph promotes subsequent H3K14ac formation and is required for transcriptional activation through TBP recruitment to the promoters. Mono-, di- and trimethylated by the COMPASS complex to form H3K4me1/2/3. H3K4me activates gene expression by regulating transcription elongation and plays a role in telomere length maintenance. H3K4me enrichment correlates with transcription levels, and occurs in a 5' to 3' gradient with H3K4me3 enrichment at the 5'-end of genes, shifting to H3K4me2 and then H3K4me1. Methylated by SET2 to form H3K36me. H3K36me represses gene expression. Methylated by DOT1 to form H3K79me. H3K79me is required for association of SIR proteins with telomeric regions and for telomeric silencing. The COMPASS-mediated formation of H3K4me2/3 and the DOT1-mediated formation of H3K79me require H2BK123ub1. Post-translationally, acetylation of histone H3 leads to transcriptional activation. H3K14ac formation by GCN5 is promoted by H3S10ph. H3K14ac can also be formed by ESA1. H3K56ac formation occurs predominantly in newly synthesized H3 molecules during G1, S and G2/M of the cell cycle and may be involved in DNA repair.

It is found in the nucleus. The protein resides in the chromosome. Functionally, core component of nucleosome. Nucleosomes wrap and compact DNA into chromatin, limiting DNA accessibility to the cellular machineries which require DNA as a template. Histones thereby play a central role in transcription regulation, DNA repair, DNA replication and chromosomal stability. DNA accessibility is regulated via a complex set of post-translational modifications of histones, also called histone code, and nucleosome remodeling. The protein is Histone H3.3 (HHT3) of Candida albicans (strain SC5314 / ATCC MYA-2876) (Yeast).